The chain runs to 208 residues: ATP-dependent Clp protease proteolytic subunit 1 (208 aa).

The active-site Nucleophile is Ser108. Residue His133 is part of the active site.

This sequence belongs to the peptidase S14 family. Fourteen ClpP subunits assemble into 2 heptameric rings which stack back to back to give a disk-like structure with a central cavity, resembling the structure of eukaryotic proteasomes.

It is found in the cytoplasm. The enzyme catalyses Hydrolysis of proteins to small peptides in the presence of ATP and magnesium. alpha-casein is the usual test substrate. In the absence of ATP, only oligopeptides shorter than five residues are hydrolyzed (such as succinyl-Leu-Tyr-|-NHMec, and Leu-Tyr-Leu-|-Tyr-Trp, in which cleavage of the -Tyr-|-Leu- and -Tyr-|-Trp bonds also occurs).. Its function is as follows. Cleaves peptides in various proteins in a process that requires ATP hydrolysis. Has a chymotrypsin-like activity. Plays a major role in the degradation of misfolded proteins. This is ATP-dependent Clp protease proteolytic subunit 1 from Corynebacterium efficiens (strain DSM 44549 / YS-314 / AJ 12310 / JCM 11189 / NBRC 100395).